A 251-amino-acid polypeptide reads, in one-letter code: 5'-nucleotidase SurE (251 aa).

Positions 8, 9, 39, and 90 each coordinate a divalent metal cation.

Belongs to the SurE nucleotidase family. It depends on a divalent metal cation as a cofactor.

The protein localises to the cytoplasm. The enzyme catalyses a ribonucleoside 5'-phosphate + H2O = a ribonucleoside + phosphate. In terms of biological role, nucleotidase that shows phosphatase activity on nucleoside 5'-monophosphates. The sequence is that of 5'-nucleotidase SurE from Colwellia psychrerythraea (strain 34H / ATCC BAA-681) (Vibrio psychroerythus).